Here is a 1324-residue protein sequence, read N- to C-terminus: Coiled-coil domain-containing protein 171 (1324 aa).

Coiled coils occupy residues 29–296 (KNET…RAAH), 325–393 (AEAV…RLQY), 453–521 (FSVV…KCAD), 599–712 (SELC…VREN), and 981–1145 (FTQR…KECV). The span at 1301-1312 (PHSLSSQSSPGV) shows a compositional bias: polar residues. Residues 1301 to 1324 (PHSLSSQSSPGVPTNAKRPSQIGL) form a disordered region.

The protein is Coiled-coil domain-containing protein 171 (Ccdc171) of Mus musculus (Mouse).